The chain runs to 476 residues: MTNSEQERWSRVKGRLRSTVGEDVYTSWFARMDLEAVQDESVHLSVPTRFLKSWIQAHYAERVLSAWQAEMPEVHRIDLSVRTAMRCATPAKEAPAAVEARRPERSDAKPVSDARAPVMTPVAASHDALGGSPLDPRLTFASFVVGRANTLAHAAARQVADGRRGDPVMFNPLYIHAGVGLGKTHLLQAVTWAGNAGGERKVLYLTAEKFMYGFVAALKSQTALAFKEALRGIDVLVIDDLQFLQGKSTQAEFCHTLNALIDAGRQVVIAADRPPSDLESLDDRVRSRLAGGLVVEMATLGEDLRLGILKSRVAAARAHHASFDVPEAVLDYLARSITHNGRDLEGAINRLLAHSKLNNQPVTLDMAEREVRDLVRPQEPKRIKIEDIQRVVARQYNVSRSDLLSSRRTANVVRPRQVAMYLAKTLTLRSLPEIGRRFGGRDHTTVLHAVRKIEALVGKDVALNDEVESLKRQLQD.

The segment at 1-73 (MTNSEQERWS…LSAWQAEMPE (73 aa)) is domain I, interacts with DnaA modulators. The segment at 73–132 (EVHRIDLSVRTAMRCATPAKEAPAAVEARRPERSDAKPVSDARAPVMTPVAASHDALGGS) is domain II. The disordered stretch occupies residues 92–115 (KEAPAAVEARRPERSDAKPVSDAR). Over residues 99–112 (EARRPERSDAKPVS) the composition is skewed to basic and acidic residues. The domain III, AAA+ region stretch occupies residues 133–355 (PLDPRLTFAS…GAINRLLAHS (223 aa)). ATP contacts are provided by Gly-180, Gly-182, Lys-183, and Thr-184. The segment at 356–476 (KLNNQPVTLD…VESLKRQLQD (121 aa)) is domain IV, binds dsDNA.

This sequence belongs to the DnaA family. As to quaternary structure, oligomerizes as a right-handed, spiral filament on DNA at oriC.

Its subcellular location is the cytoplasm. Functionally, plays an essential role in the initiation and regulation of chromosomal replication. ATP-DnaA binds to the origin of replication (oriC) to initiate formation of the DNA replication initiation complex once per cell cycle. Binds the DnaA box (a 9 base pair repeat at the origin) and separates the double-stranded (ds)DNA. Forms a right-handed helical filament on oriC DNA; dsDNA binds to the exterior of the filament while single-stranded (ss)DNA is stabiized in the filament's interior. The ATP-DnaA-oriC complex binds and stabilizes one strand of the AT-rich DNA unwinding element (DUE), permitting loading of DNA polymerase. After initiation quickly degrades to an ADP-DnaA complex that is not apt for DNA replication. Binds acidic phospholipids. The chain is Chromosomal replication initiator protein DnaA from Bradyrhizobium sp. (strain ORS 278).